Here is a 314-residue protein sequence, read N- to C-terminus: Glutathione synthetase (314 aa).

One can recognise an ATP-grasp domain in the interval 125–311 (EKIAAQLFPQ…IAGQLFDAIE (187 aa)). Position 151–208 (151–208 (FVQKQEQAILKPLDGMGGHSIFRSSNGDPNLNVILETLTDGGRTLAIAQRYLQQIIEG)) interacts with ATP. The Mg(2+) site is built by Glu282 and Asn284.

It belongs to the prokaryotic GSH synthase family. It depends on Mg(2+) as a cofactor. The cofactor is Mn(2+).

It carries out the reaction gamma-L-glutamyl-L-cysteine + glycine + ATP = glutathione + ADP + phosphate + H(+). It participates in sulfur metabolism; glutathione biosynthesis; glutathione from L-cysteine and L-glutamate: step 2/2. In Xylella fastidiosa (strain Temecula1 / ATCC 700964), this protein is Glutathione synthetase.